Consider the following 454-residue polypeptide: Ig mu chain C region (454 aa).

A CH1 region spans residues Ser-1–Val-105. A disulfide bridge links Cys-27 with Cys-88. N-linked (GlcNAc...) asparagine glycosylation is found at Asn-45, Asn-112, Asn-192, Asn-210, Asn-238, Asn-257, and Asn-280. Residues Val-106 to Ser-218 form a CH2 region. Residues Cys-135 and Cys-198 are joined by a disulfide bond. The CH3 stretch occupies residues Pro-219–Glu-324. 2 disulfides stabilise this stretch: Cys-245-Cys-304 and Cys-352-Cys-414. The tract at residues Met-325 to Tyr-454 is CH4. The N-linked (GlcNAc...) asparagine glycan is linked to Asn-441.

The sequence is that of Ig mu chain C region from Mesocricetus auratus (Golden hamster).